Reading from the N-terminus, the 262-residue chain is MDINASRALANVYDLPDDFFPKIDDLVRDAKDALEPYWKSDSIKKHVLIATHFVDLIEDFWQTTQGMHEIAESLRAVIPPTTAPVPTGYLIQHEEAEEIPLGDLFKHQEERIVSFQPDYPITARIHAHLKAYAKINEESLDRARRLLWWHYNCLLWGEANVTNYISRLRTWLSTPEKYRGRDAPTIEAITRPIQAAQGGRKTSSGTRKPRGLEPRRRKVKTTVVYGRRRSKSRERRAPSPQRAGSPLPRSSSSHHRSPSPRK.

The disordered stretch occupies residues 183–262 (APTIEAITRP…SHHRSPSPRK (80 aa)). The short motif at 215–233 (RRRKVKTTVVYGRRRSKSR) is the Bipartite nuclear localization signal element. Composition is skewed to basic residues over residues 215–234 (RRRKVKTTVVYGRRRSKSRE) and 252–262 (SSHHRSPSPRK).

This sequence belongs to the avihepadnavirus core antigen family. As to quaternary structure, homodimerizes, then multimerizes.

The protein localises to the virion. The protein resides in the host cytoplasm. Self assembles to form an icosahedral capsid. Most capsid appear to be large particles with an icosahedral symmetry of T=4 and consist of 240 copies of capsid protein, though a fraction forms smaller T=3 particles consisting of 180 capsid proteins. Entering capsid are transported along microtubules to the nucleus. Phosphorylation of the capsid is thought to induce exposure of nuclear localization signal in the C-terminal portion of the capsid protein that allows binding to the nuclear pore complex via the importin (karyopherin-) alpha and beta. Capsids are imported in intact form through the nuclear pore into the nuclear basket, where it probably binds NUP153. Only capsids that contain the mature viral genome can release the viral DNA and capsid protein into the nucleoplasm. Immature capsids get stucked in the basket. Capsids encapsulate the pre-genomic RNA and the P protein. Pre-genomic RNA is reverse transcribed into DNA while the capsid is still in the cytoplasm. The capsid can then either be directed to the nucleus, providing more genome for transcription, or bud through the endoplasmic reticulum to provide new virions. The chain is Capsid protein (C) from Duck hepatitis B virus (isolate Shanghai/DHBVQCA34) (DHBV).